The primary structure comprises 487 residues: UL37 immediate early glycoprotein (487 aa).

Residues 1 to 22 form the signal peptide; that stretch reads MSPVYVNLLGSVGLLAFWYFSY. Residues 83-107 are compositionally biased toward acidic residues; the sequence is GEESVTEDTEREDTEEEREDEEEEN. The segment at 83-121 is disordered; sequence GEESVTEDTEREDTEEEREDEEEENEARTPEVNPIDAEG. 17 N-linked (GlcNAc...) asparagine; by host glycosylation sites follow: N206, N210, N219, N223, N242, N246, N275, N281, N294, N297, N306, N333, N337, N343, N379, N384, and N391. Residues 433-459 form a helical membrane-spanning segment; sequence WALLSICTVAAGSIALLSLFCILLIGL.

This sequence belongs to the immediate early glycoprotein family. As to quaternary structure, interacts with host BAX. Interacts with host RSAD2/viperin; this interaction results in RSAD2/viperin relocalization from the endoplasmic reticulum to the mitochondria, actin cytoskeleton disruption and enhancement of infection. Interacts with host PEX19; this interaction inhibits the peroxisomal-dependent antiviral signaling. Interacts with host CHCHD6; this interaction rewires mitochondria by engaging the conserved MICOS complex.

It localises to the host endoplasmic reticulum membrane. The protein resides in the host Golgi apparatus membrane. Its subcellular location is the host mitochondrion membrane. It is found in the host peroxisome. In terms of biological role, multifunctional transmembrane protein that plays several key roles in viral replication. Rapidely traffics from the host endoplasmic reticulum to the outer mitochondrial membrane where it acts to inhibit host immune response, block apoptotic signaling, regulate calcium flux, and induce mitochondrial fragmentation. Sequesters proapoptotic BAX at the outer mitochondrial membrane and prevents cytochrome c release and subsequent initiation of the proapoptotic cascade. Also provoques a calcium efflux from host endoplasmic reticulum and F-actin cytoskeleton disruption. Participates in the increase of host mitochondrial biogenesis, thus promoting viral replication by efficient use of newly made mitochondria. Additionally, a subset of vMIA localizes to peroxisomes, causing fragmentation and blocking peroxisomal MAVS signaling. Mechanistically, inhibits host MAVS oligomerization at peroxisomes in a mitochondrial fission factors (MFF)-dependent manner and in mitochondria independently of mitochondrial fission factors. Plays an essential role in the trafficking of host viperin/RSAD2 from the endoplasmic reticulum to the viral assembly compartment via the mitochondria during viral infection as failure of viperin to localize to the mitochondria results in insufficient lipogenesis and thus reduces viral replication. Its function is as follows. May play a role in escape from the host antiviral response. This chain is UL37 immediate early glycoprotein (UL37), found in Human cytomegalovirus (strain AD169) (HHV-5).